Consider the following 252-residue polypeptide: AAVVVLMVLSSPGTEGGNSERHFVSQFKGECYFTNGTQRIRSVDRYIYNREEYLRFDSDVGEYRAVTELGRSDAEYYNKQYLERTRAELDTVCRHNYEGVETPTSLRRLEQPNVVISLSRTEALNHHNTLVCSVTDFYPAKIKVRWFRNGQEETVGVSSTQLIRNGDWTFQVLVMLEMAPRRGEVYTCHVEHPSLKSPITVEWRAQSESARSKMLSGIGGCVLGVIFLGLGLFIRYRSQKGPRGPPPAGLLQ.

The first 16 residues, 1-16 (AAVVVLMVLSSPGTEG), serve as a signal peptide directing secretion. Residues 17-109 (GNSERHFVSQ…VETPTSLRRL (93 aa)) form a beta-1 region. Residues 17 to 213 (GNSERHFVSQ…RAQSESARSK (197 aa)) are Extracellular-facing. 2 disulfides stabilise this stretch: Cys31–Cys93 and Cys132–Cys188. A glycan (N-linked (GlcNAc...) asparagine) is linked at Asn35. The segment at 110-203 (EQPNVVISLS…SLKSPITVEW (94 aa)) is beta-2. An Ig-like C1-type domain is found at 112–200 (PNVVISLSRT…EHPSLKSPIT (89 aa)). The segment at 204-213 (RAQSESARSK) is connecting peptide. The chain crosses the membrane as a helical span at residues 214–234 (MLSGIGGCVLGVIFLGLGLFI). At 235 to 252 (RYRSQKGPRGPPPAGLLQ) the chain is on the cytoplasmic side.

The protein belongs to the MHC class II family. In terms of processing, ubiquitinated in immature dendritic cells leading to down-regulation of MHC class II.

The protein localises to the membrane. The sequence is that of H-2 class II histocompatibility antigen, A-F beta chain (H2-Ab1) from Mus musculus (Mouse).